Reading from the N-terminus, the 426-residue chain is Inositol hexakisphosphate kinase 2 (426 aa).

ATP is bound by residues 207 to 209 (ENL) and Asp220. Residues Lys222 and 236–243 (KAANQIRK) contribute to the substrate site. Asp383 provides a ligand contact to ATP. His386 lines the substrate pocket.

Belongs to the inositol phosphokinase (IPK) family.

The protein localises to the nucleus. It catalyses the reaction 1D-myo-inositol hexakisphosphate + ATP = 5-diphospho-1D-myo-inositol 1,2,3,4,6-pentakisphosphate + ADP. It functions in the pathway phospholipid metabolism; phosphatidylinositol metabolism. Its activity is regulated as follows. Inhibited by flavonoids, including myricetin, quercetin, luteolin, isorhamnetin, rhamnetin, kaempferol, diosmetin and apigenin. Its function is as follows. Converts inositol hexakisphosphate (InsP6) to diphosphoinositol pentakisphosphate (InsP7/PP-InsP5). The polypeptide is Inositol hexakisphosphate kinase 2 (Homo sapiens (Human)).